Consider the following 209-residue polypeptide: MAGSTAEQHGDGPLVGVLALQGDVREHVRVLQGFGARTRLVRQPKDLPGISGLVIPGGESTVMDKLSRQFGIAGPLRSAIDDGLPVYGTCAGLIMLADEIVDAIHDQRSIGGLDVSVRRNAFGSQTASFEVDLDVPALGDPPVHAVFIRAPVVASVGPAASALASLDDGRVVAVRQGALLGTSFHPEVTGDLRFHRLFLDMVEDAGRTL.

Gly-58 to Ser-60 serves as a coordination point for L-glutamine. Cys-90 (nucleophile) is an active-site residue. L-glutamine-binding positions include Arg-119 and Ile-148–Arg-149. Residues His-185 and Glu-187 each act as charge relay system in the active site.

It belongs to the glutaminase PdxT/SNO family. In the presence of PdxS, forms a dodecamer of heterodimers. Only shows activity in the heterodimer.

The enzyme catalyses aldehydo-D-ribose 5-phosphate + D-glyceraldehyde 3-phosphate + L-glutamine = pyridoxal 5'-phosphate + L-glutamate + phosphate + 3 H2O + H(+). The catalysed reaction is L-glutamine + H2O = L-glutamate + NH4(+). The protein operates within cofactor biosynthesis; pyridoxal 5'-phosphate biosynthesis. In terms of biological role, catalyzes the hydrolysis of glutamine to glutamate and ammonia as part of the biosynthesis of pyridoxal 5'-phosphate. The resulting ammonia molecule is channeled to the active site of PdxS. This is Pyridoxal 5'-phosphate synthase subunit PdxT from Clavibacter michiganensis subsp. michiganensis (strain NCPPB 382).